The chain runs to 107 residues: Integration host factor subunit alpha (107 aa).

The protein belongs to the bacterial histone-like protein family. In terms of assembly, heterodimer of an alpha and a beta chain.

This protein is one of the two subunits of integration host factor, a specific DNA-binding protein that functions in genetic recombination as well as in transcriptional and translational control. This chain is Integration host factor subunit alpha, found in Brucella anthropi (strain ATCC 49188 / DSM 6882 / CCUG 24695 / JCM 21032 / LMG 3331 / NBRC 15819 / NCTC 12168 / Alc 37) (Ochrobactrum anthropi).